Here is a 163-residue protein sequence, read N- to C-terminus: Type VII secretion system protein EsaG (163 aa).

In terms of assembly, interacts with EssD (via C-terminus). Interacts with EssE.

It localises to the cytoplasm. Component of the type VII secretion system (Ess). Also acts as part of toxin-antitoxin system. Counteracts the toxic effect of EssD via direct interaction. The protein is Type VII secretion system protein EsaG of Staphylococcus aureus (strain NCTC 8325 / PS 47).